A 490-amino-acid polypeptide reads, in one-letter code: Beta-1,3-glucan-binding protein 1 (490 aa).

Positions 1-19 (MYKQTVVIFLLCFFICVSC) are cleaved as a signal peptide. Residues 20-119 (YEVPPAKLEA…GEWTVTGYVD (100 aa)) form the CBM39 domain. Residues 152–490 (PPTSQNTYPC…QVDYVRVYAL (339 aa)) enclose the GH16 domain. Asn-372 carries N-linked (GlcNAc...) asparagine glycosylation.

This sequence belongs to the insect beta-1,3-glucan binding protein family. Monomer. In terms of tissue distribution, hemolymph.

It localises to the secreted. Functionally, plays a role in the recognition of invading microorganisms activating the phenoloxidase cascade. Binds specifically to beta-1,3-glucan. Binds the Aspergillus niger cell wall component alpha-1,3-glucan, a fungal pathogen-associated molecular pattern (PAMP) that activates the host immune response. The protein is Beta-1,3-glucan-binding protein 1 of Galleria mellonella (Greater wax moth).